A 281-amino-acid polypeptide reads, in one-letter code: Nucleotide-binding protein Noc_2797 (281 aa).

Gly8–Ser15 lines the ATP pocket. Asp58–Asn61 provides a ligand contact to GTP.

The protein belongs to the RapZ-like family.

Functionally, displays ATPase and GTPase activities. This is Nucleotide-binding protein Noc_2797 from Nitrosococcus oceani (strain ATCC 19707 / BCRC 17464 / JCM 30415 / NCIMB 11848 / C-107).